The sequence spans 141 residues: Mu-like prophage FluMu protein gp36 (141 aa).

To phage Mu protein gp36.

In Haemophilus influenzae (strain ATCC 51907 / DSM 11121 / KW20 / Rd), this protein is Mu-like prophage FluMu protein gp36.